Here is a 321-residue protein sequence, read N- to C-terminus: Diguanylate cyclase (321 aa).

A PAS domain is found at 28-98 (QFSLHELVLN…AADQQVFETR (71 aa)). The PAC domain occupies 102 to 155 (VHEERAIAKSNGLVRIYRAVKHPILHRVTGEVIGLIGVSTDITDIVELREQLYQ). Positions 187–318 (QPLSCISIDI…GRNRCCIYRQ (132 aa)) constitute a GGDEF domain. Residues Asp-195, Ile-196, and Glu-238 each contribute to the Mg(2+) site. The active-site Proton acceptor is Glu-238.

Mg(2+) serves as cofactor.

It catalyses the reaction 2 GTP = 3',3'-c-di-GMP + 2 diphosphate. Involved in biofilm formation. Catalyzes the conversion of GTP to c-di-GMP. The chain is Diguanylate cyclase from Vibrio cholerae serotype O1 (strain ATCC 39541 / Classical Ogawa 395 / O395).